The sequence spans 1861 residues: Amylopullulanase (1861 aa).

The N-terminal stretch at methionine 1–alanine 35 is a signal peptide. Ca(2+) is bound by residues aspartate 248, asparagine 250, aspartate 288, aspartate 343, asparagine 401, aspartate 403, asparagine 406, aspartate 407, and aspartate 453. Residues histidine 526 and arginine 626 each coordinate substrate. Aspartate 628 acts as the Nucleophile in catalysis. Catalysis depends on glutamate 657, which acts as the Proton donor. Substrate contacts are provided by residues histidine 733–aspartate 734, aspartate 793, and arginine 797. Fibronectin type-III domains follow at residues alanine 929–isoleucine 1021 and lysine 1158–isoleucine 1252. The 109-residue stretch at lysine 1246 to aspartate 1354 folds into the CBM20 domain. A disordered region spans residues glutamine 1448–serine 1486. Over residues asparagine 1450–serine 1486 the composition is skewed to low complexity. SLH domains lie at glutamate 1677 to glutamate 1740, phenylalanine 1741 to asparagine 1799, and alanine 1802 to isoleucine 1861.

Belongs to the glycosyl hydrolase 13 family. The cofactor is Ca(2+). Glycosylated.

The protein resides in the secreted. It is found in the cell wall. It carries out the reaction Endohydrolysis of (1-&gt;4)-alpha-D-glucosidic linkages in polysaccharides containing three or more (1-&gt;4)-alpha-linked D-glucose units.. The enzyme catalyses Hydrolysis of (1-&gt;6)-alpha-D-glucosidic linkages in pullulan, amylopectin and glycogen, and in the alpha- and beta-limit dextrins of amylopectin and glycogen.. The sequence is that of Amylopullulanase (amyB) from Thermoanaerobacterium thermosulfurigenes (Clostridium thermosulfurogenes).